The following is a 158-amino-acid chain: MSKEKEEIKIIAQNRKAFHDYFIEETYEAGIELVGTEVKSVRQGKVNLKDSFARVENNEVILYNMHISPYEKGNIFNKDPLRPRKLLLHRHEINKLSGYVSRKGYTLIPTKVYLKRGLVKVELAVAKGKKLFDKREDIARRDAKRELEKQFKEKQLGI.

It belongs to the SmpB family.

The protein localises to the cytoplasm. Required for rescue of stalled ribosomes mediated by trans-translation. Binds to transfer-messenger RNA (tmRNA), required for stable association of tmRNA with ribosomes. tmRNA and SmpB together mimic tRNA shape, replacing the anticodon stem-loop with SmpB. tmRNA is encoded by the ssrA gene; the 2 termini fold to resemble tRNA(Ala) and it encodes a 'tag peptide', a short internal open reading frame. During trans-translation Ala-aminoacylated tmRNA acts like a tRNA, entering the A-site of stalled ribosomes, displacing the stalled mRNA. The ribosome then switches to translate the ORF on the tmRNA; the nascent peptide is terminated with the 'tag peptide' encoded by the tmRNA and targeted for degradation. The ribosome is freed to recommence translation, which seems to be the essential function of trans-translation. This is SsrA-binding protein from Caldanaerobacter subterraneus subsp. tengcongensis (strain DSM 15242 / JCM 11007 / NBRC 100824 / MB4) (Thermoanaerobacter tengcongensis).